Here is a 206-residue protein sequence, read N- to C-terminus: Large ribosomal subunit protein uL22m (206 aa).

The transit peptide at 1 to 40 (MAAALLRELGALWVPNLRIWTTQMLRVLPQSCIHTSTSLD) directs the protein to the mitochondrion.

The protein belongs to the universal ribosomal protein uL22 family. As to quaternary structure, component of the mitochondrial ribosome large subunit (39S) which comprises a 16S rRNA and about 50 distinct proteins.

It localises to the mitochondrion. The polypeptide is Large ribosomal subunit protein uL22m (Mrpl22) (Rattus norvegicus (Rat)).